The sequence spans 77 residues: Cysteine-rich protein 1 (77 aa).

The region spanning 2–63 (PKCPKCSKEV…HPCYAAMFGP (62 aa)) is the LIM zinc-binding domain. N6-acetyllysine occurs at positions 9 and 22. Position 68 is an omega-N-methylarginine (Arg-68).

In terms of biological role, seems to have a role in zinc absorption and may function as an intracellular zinc transport protein. The sequence is that of Cysteine-rich protein 1 (CRIP1) from Bos taurus (Bovine).